We begin with the raw amino-acid sequence, 427 residues long: Gamma-glutamyl phosphate reductase (427 aa).

This sequence belongs to the gamma-glutamyl phosphate reductase family.

Its subcellular location is the cytoplasm. It carries out the reaction L-glutamate 5-semialdehyde + phosphate + NADP(+) = L-glutamyl 5-phosphate + NADPH + H(+). It functions in the pathway amino-acid biosynthesis; L-proline biosynthesis; L-glutamate 5-semialdehyde from L-glutamate: step 2/2. In terms of biological role, catalyzes the NADPH-dependent reduction of L-glutamate 5-phosphate into L-glutamate 5-semialdehyde and phosphate. The product spontaneously undergoes cyclization to form 1-pyrroline-5-carboxylate. The protein is Gamma-glutamyl phosphate reductase of Anaeromyxobacter dehalogenans (strain 2CP-1 / ATCC BAA-258).